Reading from the N-terminus, the 51-residue chain is Insulin (51 aa).

Intrachain disulfides connect Cys-7/Cys-37, Cys-19/Cys-50, and Cys-36/Cys-41.

Belongs to the insulin family. Heterodimer of a B chain and an A chain linked by two disulfide bonds.

The protein localises to the secreted. Functionally, insulin decreases blood glucose concentration. It increases cell permeability to monosaccharides, amino acids and fatty acids. It accelerates glycolysis, the pentose phosphate cycle, and glycogen synthesis in liver. In Acomys cahirinus (Cairo spiny mouse), this protein is Insulin (INS).